A 914-amino-acid polypeptide reads, in one-letter code: Alanine--tRNA ligase (914 aa).

Zn(2+) is bound by residues H613, H617, C717, and H721.

This sequence belongs to the class-II aminoacyl-tRNA synthetase family. Zn(2+) serves as cofactor.

It is found in the cytoplasm. It catalyses the reaction tRNA(Ala) + L-alanine + ATP = L-alanyl-tRNA(Ala) + AMP + diphosphate. In terms of biological role, catalyzes the attachment of alanine to tRNA(Ala) in a two-step reaction: alanine is first activated by ATP to form Ala-AMP and then transferred to the acceptor end of tRNA(Ala). Also edits incorrectly charged Ser-tRNA(Ala) and Gly-tRNA(Ala) via its editing domain. This Pyrococcus furiosus (strain ATCC 43587 / DSM 3638 / JCM 8422 / Vc1) protein is Alanine--tRNA ligase.